A 743-amino-acid polypeptide reads, in one-letter code: Tegument protein UL46 homolog (743 aa).

3 disordered regions span residues 437–481 (GCPP…VSSA), 522–590 (HQRS…SGYM), and 693–743 (RVRL…VSSL). A compositionally biased stretch (low complexity) spans 526-552 (DSSSSDNSSCSSTETEYITISSTPSPT). Polar residues-rich tracts occupy residues 573–586 (QPAN…SPAN) and 697–716 (GTTT…TPSS). The segment covering 722–743 (RTLSTSESPESSPEQQERVSSL) has biased composition (low complexity).

This sequence belongs to the herpesviridae HHV-1 VP11/12 protein family. Interacts with VP16.

The protein resides in the virion tegument. It localises to the host cell membrane. Functionally, abundant tegument protein. Trans-activates the immediate early genes. This Equus caballus (Horse) protein is Tegument protein UL46 homolog.